A 182-amino-acid chain; its full sequence is Hexose transport activator protein (182 aa).

The interval 46-65 is disordered; sequence GIWGPMEKKPGGVGKKKGSE.

Multicopy expression suppresses glucose-uptake defects in various yeast mutants. The sequence is that of Hexose transport activator protein (AHT1) from Saccharomyces cerevisiae (strain ATCC 204508 / S288c) (Baker's yeast).